A 31-amino-acid polypeptide reads, in one-letter code: Cytochrome b6-f complex subunit 6 (31 aa).

The chain crosses the membrane as a helical span at residues 3-23 (LIIGYIILLACAFGLAAGLYF).

Belongs to the PetL family. The 4 large subunits of the cytochrome b6-f complex are cytochrome b6, subunit IV (17 kDa polypeptide, PetD), cytochrome f and the Rieske protein, while the 4 small subunits are PetG, PetL, PetM and PetN. The complex functions as a dimer.

It localises to the plastid. It is found in the chloroplast thylakoid membrane. Functionally, component of the cytochrome b6-f complex, which mediates electron transfer between photosystem II (PSII) and photosystem I (PSI), cyclic electron flow around PSI, and state transitions. PetL is important for photoautotrophic growth as well as for electron transfer efficiency and stability of the cytochrome b6-f complex. The polypeptide is Cytochrome b6-f complex subunit 6 (Guillardia theta (Cryptophyte)).